A 342-amino-acid polypeptide reads, in one-letter code: Foldase protein PrsA (342 aa).

The first 20 residues, 1 to 20 (MKKKLILAAAGAMAVFSLAA), serve as a signal peptide directing secretion. Residue C21 is the site of N-palmitoyl cysteine attachment. C21 is lipidated: S-diacylglycerol cysteine. Positions 142-235 (HPEVEAQIIQ…QTYQTTYYVV (94 aa)) constitute a PpiC domain. The disordered stretch occupies residues 297–342 (MQTESSSASSEKKESKSSDSKTSDTKTSDSEKATDSSSKTTESSSK). The segment covering 306-330 (SEKKESKSSDSKTSDTKTSDSEKAT) has biased composition (basic and acidic residues). A compositionally biased stretch (low complexity) spans 331 to 342 (DSSSKTTESSSK).

This sequence belongs to the PrsA family.

The protein resides in the cell membrane. The catalysed reaction is [protein]-peptidylproline (omega=180) = [protein]-peptidylproline (omega=0). Functionally, plays a major role in protein secretion by helping the post-translocational extracellular folding of several secreted proteins. The polypeptide is Foldase protein PrsA (Enterococcus faecalis (strain ATCC 700802 / V583)).